We begin with the raw amino-acid sequence, 876 residues long: Monofunctional isopimaradiene synthase, chloroplastic (876 aa).

The N-terminal 64 residues, 1-64, are a transit peptide targeting the chloroplast; it reads MAMPSYSSLS…YLRLGSRKII (64 aa). The Mg(2+) site is built by D628, D632, N772, T776, and E780. The DDXXD motif signature appears at 628–632; that stretch reads DDLYD.

It belongs to the terpene synthase family. Tpsd subfamily. Requires Mg(2+) as cofactor.

It is found in the plastid. Its subcellular location is the chloroplast. The catalysed reaction is (+)-copalyl diphosphate = isopimara-7,15-diene + diphosphate. Its pathway is terpene metabolism; oleoresin biosynthesis. Its function is as follows. Involved in defensive oleoresin formation in conifers in response to insect attack or other injury. Involved in diterpene (C20) olefins biosynthesis. Monofunctional enzyme lacking the DXDD motif in the class II active site relevant for the cyclization of geranylgeranyl diphosphate (GGPP). Requires (+)-copalyl diphosphate ((+)-CPP) as substrate, but no activity with GGPP or ent-CPP. Isopimaradiene is the major products of the enzyme followed by sandaracopimaradiene. The protein is Monofunctional isopimaradiene synthase, chloroplastic of Pinus banksiana (Jack pine).